Reading from the N-terminus, the 852-residue chain is Lon protease homolog 2, peroxisomal (852 aa).

At Ser2 the chain carries N-acetylserine. A Lon N-terminal domain is found at 13–222 (LPLLLTHESV…MTIPLLVRQI (210 aa)). Residue 375-382 (GPPGVGKT) coordinates ATP. Residues 651 to 837 (LSQPGVAIGL…DEVLNAAFDG (187 aa)) enclose the Lon proteolytic domain. Active-site residues include Ser743 and Lys786. A Microbody targeting signal motif is present at residues 850–852 (SKL).

This sequence belongs to the peptidase S16 family. As to quaternary structure, interacts with PEX5. Interacts with TYSND1. May interact with enzymes involved in beta-oxidation of fatty acids, including ACOX1/AOX.

It localises to the peroxisome matrix. The catalysed reaction is Hydrolysis of proteins in presence of ATP.. In terms of biological role, ATP-dependent serine protease that mediates the selective degradation of misfolded and unassembled polypeptides in the peroxisomal matrix. Necessary for type 2 peroxisome targeting signal (PTS2)-containing protein processing and facilitates peroxisome matrix protein import. May indirectly regulate peroxisomal fatty acid beta-oxidation through degradation of the self-processed forms of TYSND1. The sequence is that of Lon protease homolog 2, peroxisomal (Lonp2) from Mus musculus (Mouse).